Here is a 184-residue protein sequence, read N- to C-terminus: Ferredoxin-thioredoxin reductase subunit A2, chloroplastic (184 aa).

A chloroplast-targeting transit peptide spans 1 to 71; it reads MTNSYALSPA…SRKNPKSTIR (71 aa).

The protein belongs to the ferredoxin thioredoxin reductase alpha subunit family. Heterodimer of subunit A (variable subunit) and subunit B (catalytic subunit). Heterodimeric FTR forms a complex with ferredoxin and thioredoxin.

Its subcellular location is the plastid. It is found in the chloroplast. Variable subunit of the ferredoxin-thioredoxin reductase (FTR), which catalyzes the two-electron reduction of thioredoxins by the electrons provided by reduced ferredoxin. The polypeptide is Ferredoxin-thioredoxin reductase subunit A2, chloroplastic (Arabidopsis thaliana (Mouse-ear cress)).